We begin with the raw amino-acid sequence, 462 residues long: MLTIYNTLSKTKEVFKPLDGNKVRMYVCGMTVYDYCHIGHGRSMVAFDLVTRWLRFSGYDLTYVRNITDIDDKIINRANENGESFDALTERMIAAMHEDEARLNILKPDMEPRATDHIPGMHAMIQTLIDKGYAYAPGNGDVYYRVAKFMGYGKLSRKKIEDLRIGARIEVDEAKQDPLDFVLWKGTKPGEPSWESPWGAGRPGWHIECSVMSTCCLGDTFDIHGGGSDLEFPHHENEIAQSEAATGKTYANAWMHCGMIRINGEKMSKSLNNFFTIRDVLEKYHPEVVRYLLVSSHYRSAINYSEDNLKDAKGALERFYHALKGLPSVAPAGGEAFVARFTEVMNDDFGTPEACAVLFEMVREINRLRESDLDAAAGLAARLKELASVLGVLQMKPEDFLQAGAEGRVDAAEVDALIQARLAARANKDWAESDRIRDQLTAMGVVLEDGKGGTTWRLADQA.

Cysteine 28 serves as a coordination point for Zn(2+). A 'HIGH' region motif is present at residues 30–40 (MTVYDYCHIGH). Positions 209, 234, and 238 each coordinate Zn(2+). Residues 266–270 (KMSKS) carry the 'KMSKS' region motif. ATP is bound at residue lysine 269.

Belongs to the class-I aminoacyl-tRNA synthetase family. As to quaternary structure, monomer. Zn(2+) serves as cofactor.

It localises to the cytoplasm. It carries out the reaction tRNA(Cys) + L-cysteine + ATP = L-cysteinyl-tRNA(Cys) + AMP + diphosphate. This Pseudomonas fluorescens (strain SBW25) protein is Cysteine--tRNA ligase.